A 142-amino-acid chain; its full sequence is ATP synthase F(0) complex subunit C3, mitochondrial (142 aa).

A mitochondrion-targeting transit peptide spans 1 to 67 (MFACAKLACT…REFQTSAISR (67 aa)). Residues 83–103 (VGVAGSGAGIGTVFGSLIIGY) traverse the membrane as a helical segment. At lysine 110 the chain carries N6,N6,N6-trimethyllysine. A helical transmembrane segment spans residues 118–138 (ILGFALSEAMGLFCLMVAFLI).

The protein belongs to the ATPase C chain family. F-type ATPases have 2 components, CF(1) - the catalytic core - and CF(0) - the membrane proton channel. CF(1) has five subunits: alpha(3), beta(3), gamma(1), delta(1), epsilon(1). CF(0) has three main subunits: a, b and c. Interacts with TMEM70 and TMEM242. Post-translationally, trimethylated by ATPSCKMT at Lys-110. Methylation is required for proper incorporation of the C subunit into the ATP synthase complex and mitochondrial respiration.

Its subcellular location is the mitochondrion membrane. Its function is as follows. Mitochondrial membrane ATP synthase (F(1)F(0) ATP synthase or Complex V) produces ATP from ADP in the presence of a proton gradient across the membrane which is generated by electron transport complexes of the respiratory chain. F-type ATPases consist of two structural domains, F(1) - containing the extramembraneous catalytic core and F(0) - containing the membrane proton channel, linked together by a central stalk and a peripheral stalk. During catalysis, ATP synthesis in the catalytic domain of F(1) is coupled via a rotary mechanism of the central stalk subunits to proton translocation. Part of the complex F(0) domain. A homomeric c-ring of probably 10 subunits is part of the complex rotary element. The sequence is that of ATP synthase F(0) complex subunit C3, mitochondrial from Pongo abelii (Sumatran orangutan).